The chain runs to 258 residues: Cobalt-precorrin-4 C(11)-methyltransferase (258 aa).

The protein belongs to the precorrin methyltransferase family. In terms of assembly, homodimer.

It carries out the reaction Co-precorrin-4 + S-adenosyl-L-methionine = Co-precorrin-5A + S-adenosyl-L-homocysteine + H(+). Its pathway is cofactor biosynthesis; adenosylcobalamin biosynthesis; cob(II)yrinate a,c-diamide from sirohydrochlorin (anaerobic route): step 4/10. Its function is as follows. Catalyzes the methylation of C-11 in cobalt-precorrin-4 to form cobalt-precorrin-5A. The chain is Cobalt-precorrin-4 C(11)-methyltransferase (cbiF) from Priestia megaterium (Bacillus megaterium).